Reading from the N-terminus, the 107-residue chain is Thioredoxin (107 aa).

The Thioredoxin domain occupies 2–107 (SVSQVTDASF…LASTLNKYIS (106 aa)). Catalysis depends on nucleophile residues Cys31 and Cys34. The cysteines at positions 31 and 34 are disulfide-linked.

This sequence belongs to the thioredoxin family.

It is found in the plastid. It localises to the chloroplast. Its function is as follows. Participates in various redox reactions through the reversible oxidation of its active center dithiol to a disulfide and catalyzes dithiol-disulfide exchange reactions. This chain is Thioredoxin (trxA), found in Pyropia yezoensis (Susabi-nori).